The following is a 335-amino-acid chain: CTD kinase subunit beta (335 aa).

Cyclin N-terminal domains follow at residues 26–151 (ILST…CFDF) and 158–241 (NYMV…LYMH). A disordered region spans residues 269–293 (KNSGRPQKPPQIDPHSSSLADEYRE).

Belongs to the cyclin family. CTDK-I consists of three subunits, ctk1/lsk1, ctk2/lsc1 and ctk3 (also called alpha, beta and gamma). Interacts with ctk1/lsk1. This interaction is dependent on ctk1/lsk1 kinase activity.

Its subcellular location is the cytoplasm. The protein localises to the nucleus. Its function is as follows. Cyclin subunit of the CTDK-I complex, which hyperphosphorylates the C-terminal heptapeptide repeat domain (CTD) of the largest RNA polymerase II subunit. As part of the CTDK-I complex, involved in RNA polymerase II transcriptional elongation and pre-mRNA 3'-end processing. Together with ctk3, required for ctk1/lsk1 CTD kinase activation. Together with ctk1/lsk1, required for the regulation of cytokinesis by phosphorylating 'Ser-2' residues found in the heptad repeats of the CTD. The chain is CTD kinase subunit beta (lsc1) from Schizosaccharomyces pombe (strain 972 / ATCC 24843) (Fission yeast).